A 132-amino-acid chain; its full sequence is MNQFDEREEWYAFNQETIDALLEDGSQADADYTIEHHFASTDFDVLEKAAVDAFKAGFEVTDAEELMLDDGETIFCFDAVVERKLDIEKLNADADALLKIADKHDVTYDGWGTYFEPREEGEYEEEEHHLND.

Belongs to the RraB family. As to quaternary structure, interacts with the C-terminal region of Rne.

The protein resides in the cytoplasm. Globally modulates RNA abundance by binding to RNase E (Rne) and regulating its endonucleolytic activity. Can modulate Rne action in a substrate-dependent manner by altering the composition of the degradosome. In Alteromonas mediterranea (strain DSM 17117 / CIP 110805 / LMG 28347 / Deep ecotype), this protein is Regulator of ribonuclease activity B.